The primary structure comprises 621 residues: Ubiquitin-like-specific protease 1 (621 aa).

Serine 2 is subject to N-acetylserine. Serine 21 and serine 25 each carry phosphoserine. Disordered regions lie at residues 116 to 150 (FDGS…ENYS) and 169 to 196 (RRRI…SNCD). Low complexity predominate over residues 124 to 141 (SGNSDVESRSSGSRSSDV). Threonine 179 carries the phosphothreonine modification. The segment covering 179–196 (TPSTSPISSLASQKSNCD) has biased composition (polar residues). Residue serine 264 is modified to Phosphoserine. The tract at residues 432–621 (NIEITVRDFK…AHLILTDALK (190 aa)) is protease. Catalysis depends on residues histidine 514, aspartate 531, and cysteine 580.

This sequence belongs to the peptidase C48 family.

The catalysed reaction is Hydrolysis of the alpha-linked peptide bond in the sequence Gly-Gly-|-Ala-Thr-Tyr at the C-terminal end of the small ubiquitin-like modifier (SUMO) propeptide, Smt3, leading to the mature form of the protein. A second reaction involves the cleavage of an epsilon-linked peptide bond between the C-terminal glycine of the mature SUMO and the lysine epsilon-amino group of the target protein.. Protease that catalyzes two essential functions in the SUMO pathway: processing of full-length SMT3 to its mature form and deconjugation of SMT3 from targeted proteins. Has an essential role in the G2/M phase of the cell cycle. This is Ubiquitin-like-specific protease 1 (ULP1) from Saccharomyces cerevisiae (strain ATCC 204508 / S288c) (Baker's yeast).